Consider the following 285-residue polypeptide: Homeobox protein vex1 (285 aa).

2 disordered regions span residues 30 to 54 and 69 to 88; these read KSGNPDKESNISLPSRATGPTLPSV and NEERSPPVKDQLHSQPAPQE. Residues 69–80 are compositionally biased toward basic and acidic residues; it reads NEERSPPVKDQL. Positions 131-190 form a DNA-binding region, homeobox; that stretch reads AARARTKFSPEQLEELERSFKENRYIGSSEKRRLSKVLKLSETQIKTWFQNRRMKFKRQT.

As to expression, widely expressed in the embryo prior to gastrulation. Becomes restricted to the ventral marginal zone by mid/late gastrulation. Ventral localization persists during gastrulation and neurulation in the ventral region of the closed blastopore and in the proctodeum during tail bud stages.

It localises to the nucleus. Its function is as follows. Transcriptional repressor. Acts in a ventral signaling pathway downstream of bmp4 to antagonize the Spemann organizer and ventrally pattern the embryonic mesoderm. Represses transcription of the dorsal genes gsc and otx2. The chain is Homeobox protein vex1 from Xenopus laevis (African clawed frog).